A 734-amino-acid polypeptide reads, in one-letter code: Oligopeptide transporter 2 (734 aa).

14 helical membrane-spanning segments follow: residues 44–64 (MWFLGLLSCILLSFLNTFFGY), 68–88 (PLMITMISVQVVTLPLGKLMA), 125–145 (GAGFGSGTAYAVGIVDIIMAF), 152–172 (FLASWILVITTQILGYGWAGI), 211–231 (FFVIAFVCSFAWYIFPAYLFL), 252–272 (LGSGMSGLGIGAFALDWSVIA), 283–303 (FFAIVNVLVGYVLVMYMVIPI), 359–379 (FFAISYGIGFAAIVSTLTHVA), 414–434 (WWFYSLLAISLVLSLVLCIFM), 442–462 (WWGLLLASFMALTFTVPVSII), 525–545 (MFLVQFIGTVIAGTVNISVAW), 596–616 (YPALNWFFLGGLIGPVLVWLL), 644–664 (ATSVNFNCWIIVGVIFNYFVF), and 677–697 (VLSAALDAGLAFMGVLLYFSL).

Belongs to the oligopeptide OPT transporter (TC 2.A.67.1) family. As to expression, expressed in flowers, leaves, roots, and stems.

The protein localises to the membrane. Functionally, involved in the translocation of tetra- and pentapeptides across the cellular membrane in an energy-dependent manner. The chain is Oligopeptide transporter 2 (OPT2) from Arabidopsis thaliana (Mouse-ear cress).